The following is a 307-amino-acid chain: Pseudouridine-5'-phosphate glycosidase (307 aa).

The active-site Proton donor is Glu28. The substrate site is built by Lys89 and Val109. Asp141 provides a ligand contact to Mn(2+). Residue 143–145 (SAD) participates in substrate binding. The Nucleophile role is filled by Lys162.

It belongs to the pseudouridine-5'-phosphate glycosidase family. As to quaternary structure, homotrimer. Requires Mn(2+) as cofactor.

The enzyme catalyses D-ribose 5-phosphate + uracil = psi-UMP + H2O. Its function is as follows. Catalyzes the reversible cleavage of pseudouridine 5'-phosphate (PsiMP) to ribose 5-phosphate and uracil. Functions biologically in the cleavage direction, as part of a pseudouridine degradation pathway. The sequence is that of Pseudouridine-5'-phosphate glycosidase from Alkaliphilus metalliredigens (strain QYMF).